The sequence spans 392 residues: 8-amino-7-oxononanoate synthase (392 aa).

Position 26 (R26) interacts with substrate. Residue 112–113 (GF) participates in pyridoxal 5'-phosphate binding. H137 contacts substrate. The pyridoxal 5'-phosphate site is built by S187, H215, and T241. K244 bears the N6-(pyridoxal phosphate)lysine mark. T357 lines the substrate pocket.

The protein belongs to the class-II pyridoxal-phosphate-dependent aminotransferase family. BioF subfamily. As to quaternary structure, homodimer. Pyridoxal 5'-phosphate serves as cofactor.

It catalyses the reaction 6-carboxyhexanoyl-[ACP] + L-alanine + H(+) = (8S)-8-amino-7-oxononanoate + holo-[ACP] + CO2. Its pathway is cofactor biosynthesis; biotin biosynthesis. Its function is as follows. Catalyzes the decarboxylative condensation of pimeloyl-[acyl-carrier protein] and L-alanine to produce 8-amino-7-oxononanoate (AON), [acyl-carrier protein], and carbon dioxide. The sequence is that of 8-amino-7-oxononanoate synthase from Photobacterium profundum (strain SS9).